We begin with the raw amino-acid sequence, 540 residues long: Maintenance of mitochondrial morphology protein 1 (540 aa).

The Lumenal portion of the chain corresponds to 1–25 (MAGPSNQTQPPPPVLTQPSLSFTQG). The chain crosses the membrane as a helical span at residues 26–46 (LLVGQLSVVLLIGAFIKFFIF). Topologically, residues 47 to 540 (GEAPPHPSRN…GSMPDPVVVT (494 aa)) are cytoplasmic. Disordered stretches follow at residues 52 to 135 (HPSR…SHQP), 275 to 331 (GPGT…ATAA), 416 to 471 (GRTG…GGSM), and 509 to 540 (YGGA…VVVT). Polar residues-rich tracts occupy residues 69–81 (YSLN…SSPR), 88–105 (STSN…NTRS), and 112–121 (YSATPTNPTS). Over residues 122–132 (KHSRSRPHHSS) the composition is skewed to basic residues. Positions 134 to 409 (QPESLDWFNV…EPRVQVVGLP (276 aa)) constitute an SMP-LTD domain. The segment covering 321–331 (TNTNTAGATAA) has biased composition (low complexity). Composition is skewed to gly residues over residues 442–471 (TAGG…GGSM) and 511–521 (GAQGGGGGGGR).

This sequence belongs to the MMM1 family. Homodimer. Component of the ER-mitochondria encounter structure (ERMES) or MDM complex, composed of MMM1, MDM10, MDM12 and MDM34. An MMM1 homodimer associates with one molecule of MDM12 on each side in a pairwise head-to-tail manner, and the SMP-LTD domains of MMM1 and MDM12 generate a continuous hydrophobic tunnel for phospholipid trafficking.

Its subcellular location is the endoplasmic reticulum membrane. Its function is as follows. Component of the ERMES/MDM complex, which serves as a molecular tether to connect the endoplasmic reticulum (ER) and mitochondria. Components of this complex are involved in the control of mitochondrial shape and protein biogenesis, and function in nonvesicular lipid trafficking between the ER and mitochondria. The MDM12-MMM1 subcomplex functions in the major beta-barrel assembly pathway that is responsible for biogenesis of all outer membrane beta-barrel proteins, and acts in a late step after the SAM complex. The MDM10-MDM12-MMM1 subcomplex further acts in the TOM40-specific pathway after the action of the MDM12-MMM1 complex. Essential for establishing and maintaining the structure of mitochondria and maintenance of mtDNA nucleoids. This is Maintenance of mitochondrial morphology protein 1 from Blastomyces gilchristii (strain SLH14081) (Blastomyces dermatitidis).